The following is a 118-amino-acid chain: Large ribosomal subunit protein bL19 (118 aa).

Belongs to the bacterial ribosomal protein bL19 family.

Functionally, this protein is located at the 30S-50S ribosomal subunit interface and may play a role in the structure and function of the aminoacyl-tRNA binding site. The sequence is that of Large ribosomal subunit protein bL19 from Campylobacter jejuni subsp. jejuni serotype O:6 (strain 81116 / NCTC 11828).